Here is an 879-residue protein sequence, read N- to C-terminus: Leucine--tRNA ligase (879 aa).

The 'HIGH' region motif lies at 45–55; it reads PYPSGALHMGH. Residues 637–641 carry the 'KMSKS' region motif; the sequence is KMSKS. Residue K640 participates in ATP binding.

This sequence belongs to the class-I aminoacyl-tRNA synthetase family.

The protein resides in the cytoplasm. It carries out the reaction tRNA(Leu) + L-leucine + ATP = L-leucyl-tRNA(Leu) + AMP + diphosphate. The polypeptide is Leucine--tRNA ligase (Xylella fastidiosa (strain M23)).